We begin with the raw amino-acid sequence, 241 residues long: tRNA pseudouridine synthase B (241 aa).

The active-site Nucleophile is the aspartate 45.

It belongs to the pseudouridine synthase TruB family. Type 1 subfamily.

It catalyses the reaction uridine(55) in tRNA = pseudouridine(55) in tRNA. Responsible for synthesis of pseudouridine from uracil-55 in the psi GC loop of transfer RNAs. This is tRNA pseudouridine synthase B from Chlamydia trachomatis serovar L2 (strain ATCC VR-902B / DSM 19102 / 434/Bu).